Here is a 142-residue protein sequence, read N- to C-terminus: Protein tost-1 (142 aa).

The segment at 97-123 (KVFEEEDKENAPTKKAVLKPSSTDEKK) is disordered.

As to quaternary structure, component of the tost-1 variant of the PETISCO complex (also called the pid-3, erh-2, tofu-6, and ife-3 small RNA complex) containing at least tost-1, tofu-6, ife-3, pid-3, and erh-2, which plays an essential role in embryogenesis. Within the complex interacts with erh-2. Within the complex interacts with pid-3 and tofu-6. In contrast to the pid-1 variant of the PETISCO complex, the tost-1 variant of the PETISCO complex plays a minor role in the biogenesis of a class of 21 nucleotide PIWI-interacting RNAs (piRNAs) that possess a uracil residue at the 5'-end (also called 21U-RNAs). Expressed in the germline.

The protein localises to the cytoplasm. Its subcellular location is the nucleus. In terms of biological role, component of the tost-1 variant of the PETISCO complex which plays an essential role in embryogenesis. Within the complex acts as an adapter which binds to the complex via erh-2. Does not seem to play a role in the biogenesis of a class of 21 nucleotide PIWI-interacting RNAs (piRNAs) that possess a uracil residue at the 5'-end (also called 21U-RNAs). May inhibit 21U-RNA accumulation. Required for chromosome segregation and cell division in early embryos. In Caenorhabditis elegans, this protein is Protein tost-1.